Consider the following 563-residue polypeptide: 5-aminolevulinate synthase, mitochondrial (563 aa).

The transit peptide at 1-18 (MESLVRQSKKLCPYIGRT) directs the protein to the mitochondrion. Substrate-binding residues include Arg137, Ser251, and Lys270. Positions 303, 331, and 373 each coordinate pyridoxal 5'-phosphate. Lys376 is a catalytic residue. Lys376 carries the N6-(pyridoxal phosphate)lysine modification. Pyridoxal 5'-phosphate-binding residues include Thr405 and Thr406. Thr491 provides a ligand contact to substrate.

It belongs to the class-II pyridoxal-phosphate-dependent aminotransferase family. As to quaternary structure, homodimer. Pyridoxal 5'-phosphate is required as a cofactor.

It is found in the mitochondrion matrix. It catalyses the reaction succinyl-CoA + glycine + H(+) = 5-aminolevulinate + CO2 + CoA. Its pathway is porphyrin-containing compound metabolism; protoporphyrin-IX biosynthesis; 5-aminolevulinate from glycine: step 1/1. Functionally, catalyzes the synthesis of 5-aminolevulinate (ALA) from succinyl-CoA and glycine, the first and rate-limiting step in heme biosynthesis. This Yarrowia lipolytica (strain CLIB 122 / E 150) (Yeast) protein is 5-aminolevulinate synthase, mitochondrial (HEM1).